The sequence spans 242 residues: DNA repair protein RecO (242 aa).

It belongs to the RecO family. As to quaternary structure, monomer.

Involved in DNA repair and RecF pathway recombination. The polypeptide is DNA repair protein RecO (Shigella boydii serotype 18 (strain CDC 3083-94 / BS512)).